Here is a 217-residue protein sequence, read N- to C-terminus: Pyrophosphatase PpaX (217 aa).

The Nucleophile role is filled by aspartate 11.

Belongs to the HAD-like hydrolase superfamily. PpaX family. Mg(2+) serves as cofactor.

It catalyses the reaction diphosphate + H2O = 2 phosphate + H(+). Hydrolyzes pyrophosphate formed during P-Ser-HPr dephosphorylation by HPrK/P. Might play a role in controlling the intracellular pyrophosphate pool. This chain is Pyrophosphatase PpaX, found in Listeria monocytogenes serotype 4b (strain CLIP80459).